The following is a 154-amino-acid chain: Superoxide dismutase [Cu-Zn] (154 aa).

Cu cation is bound by residues His-47, His-49, and His-64. An intrachain disulfide couples Cys-58 to Cys-147. The Zn(2+) site is built by His-64, His-72, His-81, and Asp-84. His-121 is a binding site for Cu cation. Residue Arg-144 participates in substrate binding.

Belongs to the Cu-Zn superoxide dismutase family. Homodimer. Cu cation serves as cofactor. The cofactor is Zn(2+).

The protein resides in the cytoplasm. Its subcellular location is the mitochondrion. It is found in the cell membrane. It catalyses the reaction 2 superoxide + 2 H(+) = H2O2 + O2. Destroys radicals which are normally produced within the cells and which are toxic to biological systems. Destroys radicals produced by host defense mechanisms. This is Superoxide dismutase [Cu-Zn] from Cryptococcus neoformans var. grubii serotype A (strain H99 / ATCC 208821 / CBS 10515 / FGSC 9487) (Filobasidiella neoformans var. grubii).